Here is a 73-residue protein sequence, read N- to C-terminus: Aminopeptidase G (73 aa).

A disordered region spans residues 39-73 (GRRAASSSWPGRGSSRRWRPGRRTGAAARGCWRAP). Composition is skewed to low complexity over residues 42-51 (AASSSWPGRG) and 61-73 (RTGA…WRAP).

This sequence belongs to the peptidase M1 family. The cofactor is Zn(2+).

Its subcellular location is the cytoplasm. Functionally, hydrolyzes preferentially the N-terminal glycine and can also hydrolyze other amino acids which are used by PepN but is unable to hydrolyze basic amino acids. This Streptomyces lividans protein is Aminopeptidase G (pepG).